We begin with the raw amino-acid sequence, 674 residues long: Sodium/myo-inositol cotransporter 2 (674 aa).

Topologically, residues 1 to 25 (MESSASSPPLTQSDPLEAFPRRTLE) are extracellular. Residues 26 to 46 (AGDIAVLVLYFLFVLAVGLWS) form a helical membrane-spanning segment. At 47–56 (TVKTKRDTVK) the chain is on the cytoplasmic side. The chain crosses the membrane as a helical span at residues 57–77 (GYFLAGGNMLWWPVGASLFAS). Residues 78–102 (NVGSGHFVGLAGSGAAAGLSVTAYE) are Extracellular-facing. The chain crosses the membrane as a helical span at residues 103–123 (LNGLFFVLMLSWIFLPIYITG). At 124–140 (QVTTMPEYLRKRFGGNR) the chain is on the cytoplasmic side. The helical transmembrane segment at 141–161 (IPIILAVLYLFIYIFTKISVD) threads the bilayer. Topologically, residues 162–180 (MYAGAIFIQQSLHVNLYLA) are extracellular. Residues 181–201 (IVGLLAVTALYTIAGGLAAVI) traverse the membrane as a helical segment. Topologically, residues 202-208 (YTDALQT) are cytoplasmic. The chain crosses the membrane as a helical span at residues 209–229 (LIMLIGALILMGYSFAAVGGL). Residues 230–272 (EGLEEKYFLAMASNRSGNSSCGLPREDAFHIFRDPVTSDLPWP) are Extracellular-facing. The helical transmembrane segment at 273-293 (GILFGMSIPSLWYWCTDQVIV) threads the bilayer. Over 294-308 (QRTLAAKNLSHAKGG) the chain is Cytoplasmic. A helical membrane pass occupies residues 309–329 (SLMAAYLKVLPLFIMVFPGMV). Over 330-374 (SRVLFPDEVACADPEICRKVCSNPAGCSDIAYPKLVLELLPTGLR) the chain is Extracellular. Residues 375-397 (GLMMAVMVAALTSSLTSIFNSAS) traverse the membrane as a helical segment. Residues 398 to 418 (TIFTMDLWNHLRPRASEKELM) lie on the Cytoplasmic side of the membrane. The chain crosses the membrane as a helical span at residues 419 to 439 (IVGRVFVLLLVLVSILWIPVV). At 440 to 446 (QASQGGQ) the chain is on the extracellular side. A helical transmembrane segment spans residues 447–467 (LFIYIQSISSYLQPPVAVVFI). Topologically, residues 468 to 479 (MGCFWKRANEKG) are cytoplasmic. The helical transmembrane segment at 480 to 500 (AFFGLVLGLLLGLVRLILDFI) threads the bilayer. Topologically, residues 501–521 (YVQPRCDQLDERPAVVKDVHY) are extracellular. Residues 522-542 (LYFSMILSSVTLITVCAVSWF) traverse the membrane as a helical segment. The Cytoplasmic segment spans residues 543 to 653 (TEPPSKEMVS…SLEENPLVKT (111 aa)). Positions 567–589 (EQVPSATPPPLTLSQNGTPEASG) are disordered. Positions 578–589 (TLSQNGTPEASG) are enriched in polar residues. Residues 654 to 674 (LLDLNLIICISCAIFLWGYFA) form a helical membrane-spanning segment.

This sequence belongs to the sodium:solute symporter (SSF) (TC 2.A.21) family.

The protein resides in the membrane. It localises to the apical cell membrane. It catalyses the reaction myo-inositol(out) + 2 Na(+)(out) = myo-inositol(in) + 2 Na(+)(in). It carries out the reaction 1D-chiro-inositol(out) + 2 Na(+)(out) = 1D-chiro-inositol(in) + 2 Na(+)(in). The catalysed reaction is D-glucose(out) + 2 Na(+)(out) = D-glucose(in) + 2 Na(+)(in). The enzyme catalyses D-xylose(out) + 2 Na(+)(out) = D-xylose(in) + 2 Na(+)(in). MI transport activity inhibited by D-chiro-inositol (DCI), phlorizin (Pz) and sodium (Na(+)). Insulin increases D-chiro-inositol uptake. Involved in the sodium-dependent cotransport of myo-inositol (MI) with a Na(+):MI stoichiometry of 2:1. Exclusively responsible for apical MI transport and absorption in intestine. Can also transport D-chiro-inositol (DCI) but not L-fucose. Exhibits stereospecific cotransport of both D-glucose and D-xylose. May induce apoptosis through the TNF-alpha, PDCD1 pathway. May play a role in the regulation of MI concentration in serum, involving reabsorption in at least the proximal tubule of the kidney. This chain is Sodium/myo-inositol cotransporter 2, found in Bos taurus (Bovine).